Consider the following 73-residue polypeptide: Translation initiation factor IF-1 (73 aa).

Residues 1 to 72 enclose the S1-like domain; the sequence is MPKKDAIEVE…TRGRVTYRFK (72 aa).

Belongs to the IF-1 family. As to quaternary structure, component of the 30S ribosomal translation pre-initiation complex which assembles on the 30S ribosome in the order IF-2 and IF-3, IF-1 and N-formylmethionyl-tRNA(fMet); mRNA recruitment can occur at any time during PIC assembly.

The protein resides in the cytoplasm. Functionally, one of the essential components for the initiation of protein synthesis. Stabilizes the binding of IF-2 and IF-3 on the 30S subunit to which N-formylmethionyl-tRNA(fMet) subsequently binds. Helps modulate mRNA selection, yielding the 30S pre-initiation complex (PIC). Upon addition of the 50S ribosomal subunit IF-1, IF-2 and IF-3 are released leaving the mature 70S translation initiation complex. The chain is Translation initiation factor IF-1 from Dehalococcoides mccartyi (strain ATCC BAA-2266 / KCTC 15142 / 195) (Dehalococcoides ethenogenes (strain 195)).